We begin with the raw amino-acid sequence, 799 residues long: Phenylalanine--tRNA ligase beta subunit (799 aa).

The 108-residue stretch at 40–147 (KSHLSSVITV…KDTTLGISVR (108 aa)) folds into the tRNA-binding domain. Positions 402–479 (SKTVTIETNL…RTIGYASIRT (78 aa)) constitute a B5 domain. 4 residues coordinate Mg(2+): D457, D463, E466, and E467. The FDX-ACB domain occupies 707-799 (SHFPQGQLDL…TAKSNGYSLR (93 aa)).

This sequence belongs to the phenylalanyl-tRNA synthetase beta subunit family. Type 1 subfamily. As to quaternary structure, tetramer of two alpha and two beta subunits. Mg(2+) serves as cofactor.

Its subcellular location is the cytoplasm. The catalysed reaction is tRNA(Phe) + L-phenylalanine + ATP = L-phenylalanyl-tRNA(Phe) + AMP + diphosphate + H(+). This is Phenylalanine--tRNA ligase beta subunit from Leptospira biflexa serovar Patoc (strain Patoc 1 / Ames).